A 456-amino-acid chain; its full sequence is Two pore potassium channel c (456 aa).

Low complexity predominate over residues 1-19; it reads MDTEPLLSPLSPSPHLLHP. A disordered region spans residues 1-112; it reads MDTEPLLSPL…PPSLFDFIGG (112 aa). The Cytoplasmic segment spans residues 1-152; the sequence is MDTEPLLSPL…RNPPPPPRRP (152 aa). The span at 52–67 shows a compositional bias: pro residues; it reads HPPPPPPPPPPPPPPP. The helical transmembrane segment at 153–173 threads the bilayer; the sequence is AIVLHAFLFLLAYLAMGVTFY. The segment at residues 192-211 is an intramembrane region (pore-forming); it reads DALYFCIVTLCTIGYGDITP. The chain crosses the membrane as a helical span at residues 223–243; that stretch reads FVLIGFGFVDILLSGMVSYVL. Residues 244–279 lie on the Cytoplasmic side of the membrane; sequence DLQEHLLITALKNPRSVRKHRHNYIFDLKKGRMRVR. The helical transmembrane segment at 280-300 threads the bilayer; it reads MKVALALTVVAICVGVGAAVL. Residues 310-329 constitute an intramembrane region (pore-forming); it reads DAVYLAVMSVTTVGYGDHAF. A helical membrane pass occupies residues 336–356; it reads LFASAWLLVSTLAVARAFLYL. At 357-456 the chain is on the cytoplasmic side; that stretch reads AEMRIDKRHR…LNEKKKGKKS (100 aa). 2 consecutive EF-hand domains span residues 373 to 408 and 412 to 447; these read LSRD…EMGK and KDIM…VTDL. Ca(2+) is bound by residues aspartate 386, aspartate 388, asparagine 390, tyrosine 392, glutamate 397, aspartate 425, lysine 431, and aspartate 436.

The protein belongs to the two pore domain potassium channel (TC 1.A.1.7) family. Homodimer.

Its subcellular location is the membrane. Its function is as follows. Inward-rectifying potassium channel. This Oryza sativa subsp. japonica (Rice) protein is Two pore potassium channel c (TPKC).